A 64-amino-acid chain; its full sequence is Photosystem II reaction center protein J (64 aa).

A helical membrane pass occupies residues 35–55; that stretch reads LWLVATAGGIAVIFVLGIFFY.

This sequence belongs to the PsbJ family. As to quaternary structure, PSII is composed of 1 copy each of membrane proteins PsbA, PsbB, PsbC, PsbD, PsbE, PsbF, PsbH, PsbI, PsbJ, PsbK, PsbL, PsbM, PsbT, PsbX, PsbY, Psb30/Ycf12, peripheral proteins PsbO, CyanoQ (PsbQ), PsbU, PsbV and a large number of cofactors. It forms dimeric complexes.

It localises to the cellular thylakoid membrane. Its function is as follows. One of the components of the core complex of photosystem II (PSII). PSII is a light-driven water:plastoquinone oxidoreductase that uses light energy to abstract electrons from H(2)O, generating O(2) and a proton gradient subsequently used for ATP formation. It consists of a core antenna complex that captures photons, and an electron transfer chain that converts photonic excitation into a charge separation. The chain is Photosystem II reaction center protein J from Prochlorococcus marinus (strain MIT 9515).